A 606-amino-acid chain; its full sequence is DNA mismatch repair protein MutL (606 aa).

A disordered region spans residues 377–401 (HRPLFAPQPAPQPDREPPLPDSGSR).

It belongs to the DNA mismatch repair MutL/HexB family.

Its function is as follows. This protein is involved in the repair of mismatches in DNA. It is required for dam-dependent methyl-directed DNA mismatch repair. May act as a 'molecular matchmaker', a protein that promotes the formation of a stable complex between two or more DNA-binding proteins in an ATP-dependent manner without itself being part of a final effector complex. The polypeptide is DNA mismatch repair protein MutL (Geobacter sulfurreducens (strain ATCC 51573 / DSM 12127 / PCA)).